We begin with the raw amino-acid sequence, 452 residues long: Scaffold protein ILK (452 aa).

At methionine 1 the chain carries N-acetylmethionine. ANK repeat units lie at residues 2–30, 31–63, 64–96, 97–129, and 130–174; these read DDIF…LNQG, DDHG…INVM, NRGD…INAV, NEHG…VSIC, and NKYG…GTTR. The interaction with LIMS1 stretch occupies residues 33 to 139; it reads HGFSPLHWAC…NKYGEMPVDK (107 aa). Threonine 173 is subject to Phosphothreonine; by PAK1. Residues 180 to 212 form a PH-like; mediates interaction with TGFB1I1 region; sequence GTLNKHSGIDFKQLNFLTKLNENHSGELWKGRW. Serine 186 carries the post-translational modification Phosphoserine. In terms of domain architecture, Protein kinase spans 193 to 446; the sequence is LNFLTKLNEN…PKFDMIVPIL (254 aa). Residues asparagine 200, asparagine 202, histidine 203, serine 204, and lysine 220 each contribute to the ATP site. A Phosphoserine; by PAK1 modification is found at serine 246. Residues histidine 270, methionine 272, and asparagine 279 each coordinate ATP. Aspartate 339 lines the Mg(2+) pocket. Position 341 (lysine 341) interacts with ATP. Residues 363-371 carry the Nuclear localization signal motif; sequence KKPEDTNRR. Residue lysine 426 is modified to N6-acetyllysine.

Belongs to the protein kinase superfamily. TKL Ser/Thr protein kinase family. Component of the heterotrimeric IPP (ILK-PINCH-PARVIN) complex composed of ILK, LIMS1/PINCH and PARVA; the complex binds to F-actin via the C-terminal tail of LIMS1 and the N-terminal region of PARVA, promoting F-actin filament bundling. Formation of the IPP complex is dependent on protein kinase C and precedes integrin-mediated cell adhesion and spreading. ILK also interacts with LIMS2/PINCH2 and with PARVB and PARVG which may substitute for LIMS1 and PARVA in the IPP complex; PARVA and PARVB compete for the same binding site. Interaction with PARVG promotes the establishment of cell polarity required for leukocyte migration. Interacts with the cytoplasmic domain of integrin ITGB1 and may also interact with integrins ITGB2, ITGB3 and/or ITGB5. Interacts probably also with TGFB1I1. Interacts (via ANK repeats) with EPHA1 (via SAM domain); stimulated by EFNA1 but independent of the kinase activity of EPHA1. Interacts with FERMT2. Interacts with LIMD2; leading to activate the protein kinase activity. Interacts with PXN/PAXILLIN (via LD motif 4). Interacts with CCDC25 (via cytoplasmic region); initiating the ILK-PARVB cascade to induce cytoskeleton rearrangement and directional migration of cells. Interacts with IQGAP1; the interaction is required for localization of IQGAP1 to the cell cortex. Phosphorylation by PAK1 modulates ILK subcellular location by promoting its nuclear export. Highly expressed in heart followed by skeletal muscle, pancreas and kidney. Weakly expressed in placenta, lung and liver.

It is found in the cell junction. The protein resides in the focal adhesion. The protein localises to the cell membrane. It localises to the cell projection. Its subcellular location is the lamellipodium. It is found in the cytoplasm. The protein resides in the myofibril. The protein localises to the sarcomere. It localises to the nucleus. Its subcellular location is the cytoskeleton. It is found in the microtubule organizing center. The protein resides in the centrosome. The protein localises to the cell cortex. Its function is as follows. Scaffold protein which mediates protein-protein interactions during a range of cellular events including focal adhesion assembly, cell adhesion and cell migration. Regulates integrin-mediated signal transduction by contributing to inside-out integrin activation. Recruits PARVA and LIMS1/PITCH to form the heterotrimeric IPP (ILK-PINCH-PARVIN) complex which binds to F-actin via the C-terminal tail of LIMS1 and the N-terminal region of PARVA, promoting F-actin filament bundling, a process required to generate force for actin cytoskeleton reorganization and subsequent dynamic cell adhesion events such as cell spreading and migration. Binding to PARVA promotes effective assembly of ILK into focal adhesions while PARVA-bound ILK can simultaneously engage integrin-beta cytoplasmic tails to mediate cell adhesion. Plays a role with PARVG in promoting the cell adhesion and spreading of leukocytes. Acts as an upstream effector of both AKT1/PKB and GSK3. Mediates trafficking of caveolae to the cell surface in an ITGB1-dependent manner by promoting the recruitment of IQGAP1 to the cell cortex which cooperates with its effector DIAPH1 to locally stabilize microtubules and allow stable insertion of caveolae into the plasma membrane. Required for the maintenance of mitotic spindle integrity by promoting phosphorylation of TACC3 by AURKA. Associates with chromatin and may act as a negative regulator of transcription when located in the nucleus. The chain is Scaffold protein ILK from Homo sapiens (Human).